The sequence spans 426 residues: Oligouridylate-binding protein 1A (426 aa).

Residues 1–26 form a disordered region; the sequence is MQNQRLIKQQQQQQQQQHQQAMIQQA. Low complexity predominate over residues 9 to 26; the sequence is QQQQQQQQQHQQAMIQQA. RRM domains are found at residues 63-137 and 148-226; these read RSVY…WAYA and FNIF…WATK. The interval 230-268 is disordered; the sequence is FGEDKHSSDGKSVVELTNGSSEDGRELSNEDAPENNPQF. Ser-250 carries the post-translational modification Phosphoserine. Positions 269–344 constitute an RRM 3 domain; it reads TTVYVGNLSP…RQIRCSWGNK (76 aa).

Interacts with UBA1A and UBA2A.

It localises to the nucleus. Its function is as follows. Heterogeneous nuclear ribonucleoprotein (hnRNP)-like protein that acts as a component of the pre-mRNA processing machinery. Functions to facilitate the nuclear maturation of plant pre-mRNAs. This chain is Oligouridylate-binding protein 1A (UBP1A), found in Arabidopsis thaliana (Mouse-ear cress).